Consider the following 383-residue polypeptide: MRLQDLSPGLGELDERHRLRRRATLESPQGDEVVIDGRSYISFASNDYLGLADHPSLVRALQQGADRWGAGSGASHLLTGHTLAHQQAEEALAGFVGREAALLFGSGYAANLAVITSLVGRGDAVFADKLNHASLNDGCLLSRADFQRFRHNDLAHLEQLLADSGAPTKLIAVDAVYSMDGDQAPLPALLALAERYDAWLYVDDAHGFGVLGDGRGSAALHGLASDRLIYMATLGKAAGLAGAFVAGCRPLVDWLVNKARTYIYTTAQPPALAAAVGASLRLIAEGGERRERLRQLISRCRQRLEGTPYAGASATAIQPFVVGSDENAVRLAETLREQGYWVPAVRPPTVPENGARLRISLSARHELSQLDALLDLMLRPAES.

Arg20 contributes to the substrate binding site. A pyridoxal 5'-phosphate-binding site is contributed by 107–108 (GY). His132 contributes to the substrate binding site. Pyridoxal 5'-phosphate contacts are provided by Ser178, His206, and Thr233. The residue at position 236 (Lys236) is an N6-(pyridoxal phosphate)lysine. Position 349 (Thr349) interacts with substrate.

Belongs to the class-II pyridoxal-phosphate-dependent aminotransferase family. BioF subfamily. In terms of assembly, homodimer. It depends on pyridoxal 5'-phosphate as a cofactor.

The catalysed reaction is 6-carboxyhexanoyl-[ACP] + L-alanine + H(+) = (8S)-8-amino-7-oxononanoate + holo-[ACP] + CO2. The protein operates within cofactor biosynthesis; biotin biosynthesis. Functionally, catalyzes the decarboxylative condensation of pimeloyl-[acyl-carrier protein] and L-alanine to produce 8-amino-7-oxononanoate (AON), [acyl-carrier protein], and carbon dioxide. The protein is 8-amino-7-oxononanoate synthase of Chromobacterium violaceum (strain ATCC 12472 / DSM 30191 / JCM 1249 / CCUG 213 / NBRC 12614 / NCIMB 9131 / NCTC 9757 / MK).